A 389-amino-acid polypeptide reads, in one-letter code: NAD-dependent protein deacetylase sirtuin-2 (389 aa).

Positions 1–34 are disordered; sequence MAEPDPSHPLETQAGKVQEAQDSDSDSEGGAAGG. Alanine 2 carries the post-translational modification N-acetylalanine. Phosphoserine is present on residues serine 23, serine 25, serine 27, and serine 53. The Deacetylase sirtuin-type domain maps to 57 to 338; the sequence is RLLDELTLEG…LALAELLGWK (282 aa). Residues 85–89 and 95–97 contribute to the NAD(+) site; these read AGIST and DFR. Serine 100 is subject to Phosphoserine. Residue 167 to 170 coordinates NAD(+); the sequence is QNID. The active-site Proton acceptor is the histidine 187. Residues cysteine 195 and cysteine 200 each contribute to the Zn(2+) site. Position 207 is a phosphoserine (serine 207). 2 residues coordinate Zn(2+): cysteine 221 and cysteine 224. Residues 262–263, 286–288, and cysteine 324 contribute to the NAD(+) site; these read TS and NKE. The segment at 350 to 389 is disordered; the sequence is ASIDAQSGAEAPNPSTSASPRKSPPPAQDEARTTEREKPQ. Serine 368 and serine 372 each carry phosphoserine. Residues 378–389 are compositionally biased toward basic and acidic residues; it reads DEARTTEREKPQ.

This sequence belongs to the sirtuin family. Class I subfamily. Interacts with CDC20, FOXO3 and FZR1. Associates with microtubules in primary cortical mature neurons. Homotrimer. Interacts (via both phosphorylated, unphosphorylated, active or inactive forms) with HDAC6; the interaction is necessary for the complex to interact with alpha-tubulin, suggesting that these proteins belong to a large complex that deacetylates the cytoskeleton. Interacts with FOXO1; the interaction is disrupted upon serum-starvation or oxidative stress, leading to increased level of acetylated FOXO1 and induction of autophagy. Interacts with RELA; the interaction occurs in the cytoplasm and is increased in a TNF-alpha-dependent manner. Interacts with HOXA10; the interaction is direct. Interacts with YWHAB and YWHAG; the interactions occur in a AKT-dependent manner and increase SIRT2-dependent TP53 deacetylation. Interacts with MAPK1/ERK2 and MAPK3/ERK1; the interactions increase SIRT2 stability and deacetylation activity. Interacts (phosphorylated form) with KMT5A isoform 2; the interaction is direct, stimulates KMT5A-mediated methyltransferase activity on histone at 'Lys-20' (H4K20me1) and is increased in a H(2)O(2)-induced oxidative stress-dependent manner. Interacts with G6PD; the interaction is enhanced by H(2)O(2) treatment. Interacts with a G1/S-specific cyclin E-CDK2 complex. Interacts with AURKA, CDK5R1 (p35 form) and CDK5 and HIF1A. Interacts with the tRNA ligase SARS1; recruited to the VEGFA promoter via interaction with SARS1. Interacts with BEX4; negatively regulates alpha-tubulin deacetylation by SIRT2. Zn(2+) serves as cofactor. In terms of processing, phosphorylated at phosphoserine and phosphothreonine. Phosphorylated at Ser-368 by a mitotic kinase CDK1/cyclin B at the G2/M transition; phosphorylation regulates the delay in cell-cycle progression. Phosphorylated at Ser-368 by a mitotic kinase G1/S-specific cyclin E/Cdk2 complex; phosphorylation inactivates SIRT2-mediated alpha-tubulin deacetylation and thereby negatively regulates cell adhesion, cell migration and neurite outgrowth during neuronal differentiation. Phosphorylated by cyclin A/Cdk2 and p35-Cdk5 complexes and to a lesser extent by the cyclin D3/Cdk4 and cyclin B/Cdk1, in vitro. Dephosphorylated at Ser-368 by CDC14A and CDC14B around early anaphase. Acetylated by EP300; acetylation leads both to the decreased of SIRT2-mediated alpha-tubulin deacetylase activity and SIRT2-mediated down-regulation of TP53 transcriptional activity. Post-translationally, ubiquitinated.

It is found in the nucleus. It localises to the cytoplasm. Its subcellular location is the perinuclear region. The protein localises to the cytoskeleton. The protein resides in the microtubule organizing center. It is found in the centrosome. It localises to the centriole. Its subcellular location is the spindle. The protein localises to the midbody. The protein resides in the chromosome. It is found in the perikaryon. It localises to the cell projection. Its subcellular location is the growth cone. The protein localises to the myelin membrane. The catalysed reaction is N(6)-acetyl-L-lysyl-[protein] + NAD(+) + H2O = 2''-O-acetyl-ADP-D-ribose + nicotinamide + L-lysyl-[protein]. It carries out the reaction N(6)-tetradecanoyl-L-lysyl-[protein] + NAD(+) + H2O = 2''-O-tetradecanoyl-ADP-D-ribose + nicotinamide + L-lysyl-[protein]. It catalyses the reaction N(6)-hexadecanoyl-L-lysyl-[protein] + NAD(+) + H2O = 2''-O-hexadecanoyl-ADP-D-ribose + nicotinamide + L-lysyl-[protein]. Inhibited by Sirtinol, A3 and M15 small molecules. Inhibited by nicotinamide. Its function is as follows. NAD-dependent protein deacetylase, which deacetylates internal lysines on histone and alpha-tubulin as well as many other proteins such as key transcription factors. Participates in the modulation of multiple and diverse biological processes such as cell cycle control, genomic integrity, microtubule dynamics, cell differentiation, metabolic networks, and autophagy. Plays a major role in the control of cell cycle progression and genomic stability. Functions in the antephase checkpoint preventing precocious mitotic entry in response to microtubule stress agents, and hence allowing proper inheritance of chromosomes. Positively regulates the anaphase promoting complex/cyclosome (APC/C) ubiquitin ligase complex activity by deacetylating CDC20 and FZR1, then allowing progression through mitosis. Associates both with chromatin at transcriptional start sites (TSSs) and enhancers of active genes. Plays a role in cell cycle and chromatin compaction through epigenetic modulation of the regulation of histone H4 'Lys-20' methylation (H4K20me1) during early mitosis. Specifically deacetylates histone H4 at 'Lys-16' (H4K16ac) between the G2/M transition and metaphase enabling H4K20me1 deposition by KMT5A leading to ulterior levels of H4K20me2 and H4K20me3 deposition throughout cell cycle, and mitotic S-phase progression. Deacetylates KMT5A modulating KMT5A chromatin localization during the mitotic stress response. Also deacetylates histone H3 at 'Lys-57' (H3K56ac) during the mitotic G2/M transition. During oocyte meiosis progression, may deacetylate histone H4 at 'Lys-16' (H4K16ac) and alpha-tubulin, regulating spindle assembly and chromosome alignment by influencing microtubule dynamics and kinetochore function. Deacetylates histone H4 at 'Lys-16' (H4K16ac) at the VEGFA promoter and thereby contributes to regulate expression of VEGFA, a key regulator of angiogenesis. Deacetylates alpha-tubulin at 'Lys-40' and hence controls neuronal motility, oligodendroglial cell arbor projection processes and proliferation of non-neuronal cells. Phosphorylation at Ser-368 by a G1/S-specific cyclin E-CDK2 complex inactivates SIRT2-mediated alpha-tubulin deacetylation, negatively regulating cell adhesion, cell migration and neurite outgrowth during neuronal differentiation. Deacetylates PARD3 and participates in the regulation of Schwann cell peripheral myelination formation during early postnatal development and during postinjury remyelination. Involved in several cellular metabolic pathways. Plays a role in the regulation of blood glucose homeostasis by deacetylating and stabilizing phosphoenolpyruvate carboxykinase PCK1 activity in response to low nutrient availability. Acts as a key regulator in the pentose phosphate pathway (PPP) by deacetylating and activating the glucose-6-phosphate G6PD enzyme, and therefore, stimulates the production of cytosolic NADPH to counteract oxidative damage. Maintains energy homeostasis in response to nutrient deprivation as well as energy expenditure by inhibiting adipogenesis and promoting lipolysis. Attenuates adipocyte differentiation by deacetylating and promoting FOXO1 interaction to PPARG and subsequent repression of PPARG-dependent transcriptional activity. Plays a role in the regulation of lysosome-mediated degradation of protein aggregates by autophagy in neuronal cells. Deacetylates FOXO1 in response to oxidative stress or serum deprivation, thereby negatively regulating FOXO1-mediated autophagy. Deacetylates a broad range of transcription factors and co-regulators regulating target gene expression. Deacetylates transcriptional factor FOXO3 stimulating the ubiquitin ligase SCF(SKP2)-mediated FOXO3 ubiquitination and degradation. Deacetylates HIF1A and therefore promotes HIF1A degradation and inhibition of HIF1A transcriptional activity in tumor cells in response to hypoxia. Deacetylates RELA in the cytoplasm inhibiting NF-kappaB-dependent transcription activation upon TNF-alpha stimulation. Inhibits transcriptional activation by deacetylating p53/TP53 and EP300. Also deacetylates EIF5A. Functions as a negative regulator on oxidative stress-tolerance in response to anoxia-reoxygenation conditions. Plays a role as tumor suppressor. In addition to protein deacetylase activity, also has activity toward long-chain fatty acyl groups and mediates protein-lysine demyristoylation and depalmitoylation of target proteins, such as ARF6 and KRAS, thereby regulating their association with membranes. This Macaca fascicularis (Crab-eating macaque) protein is NAD-dependent protein deacetylase sirtuin-2 (SIRT2).